A 448-amino-acid polypeptide reads, in one-letter code: Cytoplasmic tRNA 2-thiolation protein 2 (448 aa).

The protein belongs to the CTU2/NCS2 family.

The protein resides in the cytoplasm. The protein operates within tRNA modification; 5-methoxycarbonylmethyl-2-thiouridine-tRNA biosynthesis. Its function is as follows. Plays a central role in 2-thiolation of mcm(5)S(2)U at tRNA wobble positions of tRNA(Lys), tRNA(Glu) and tRNA(Gln). May act by forming a heterodimer with NCS6 that ligates sulfur from thiocarboxylated URM1 onto the uridine of tRNAs at wobble position. Prior mcm(5) tRNA modification by the elongator complex is required for 2-thiolation. May also be involved in protein urmylation. The protein is Cytoplasmic tRNA 2-thiolation protein 2 of Lodderomyces elongisporus (strain ATCC 11503 / CBS 2605 / JCM 1781 / NBRC 1676 / NRRL YB-4239) (Yeast).